The following is a 159-amino-acid chain: Ribosome maturation factor RimP (159 aa).

Belongs to the RimP family.

The protein resides in the cytoplasm. Functionally, required for maturation of 30S ribosomal subunits. In Geobacter sulfurreducens (strain ATCC 51573 / DSM 12127 / PCA), this protein is Ribosome maturation factor RimP.